We begin with the raw amino-acid sequence, 94 residues long: Integration host factor subunit beta (94 aa).

It belongs to the bacterial histone-like protein family. Heterodimer of an alpha and a beta chain.

Functionally, this protein is one of the two subunits of integration host factor, a specific DNA-binding protein that functions in genetic recombination as well as in transcriptional and translational control. The protein is Integration host factor subunit beta of Photorhabdus laumondii subsp. laumondii (strain DSM 15139 / CIP 105565 / TT01) (Photorhabdus luminescens subsp. laumondii).